The sequence spans 427 residues: Light-independent protochlorophyllide reductase subunit N (427 aa).

The [4Fe-4S] cluster site is built by Cys-32, Cys-57, and Cys-118.

The protein belongs to the BchN/ChlN family. Protochlorophyllide reductase is composed of three subunits; BchL, BchN and BchB. Forms a heterotetramer of two BchB and two BchN subunits. Requires [4Fe-4S] cluster as cofactor.

It catalyses the reaction chlorophyllide a + oxidized 2[4Fe-4S]-[ferredoxin] + 2 ADP + 2 phosphate = protochlorophyllide a + reduced 2[4Fe-4S]-[ferredoxin] + 2 ATP + 2 H2O. Its pathway is porphyrin-containing compound metabolism; bacteriochlorophyll biosynthesis (light-independent). In terms of biological role, component of the dark-operative protochlorophyllide reductase (DPOR) that uses Mg-ATP and reduced ferredoxin to reduce ring D of protochlorophyllide (Pchlide) to form chlorophyllide a (Chlide). This reaction is light-independent. The NB-protein (BchN-BchB) is the catalytic component of the complex. This chain is Light-independent protochlorophyllide reductase subunit N, found in Rubrivivax gelatinosus (strain NBRC 100245 / IL144).